Here is a 101-residue protein sequence, read N- to C-terminus: Urease subunit gamma (101 aa).

It belongs to the urease gamma subunit family. Heterotrimer of UreA (gamma), UreB (beta) and UreC (alpha) subunits. Three heterotrimers associate to form the active enzyme.

Its subcellular location is the cytoplasm. It catalyses the reaction urea + 2 H2O + H(+) = hydrogencarbonate + 2 NH4(+). It functions in the pathway nitrogen metabolism; urea degradation; CO(2) and NH(3) from urea (urease route): step 1/1. This chain is Urease subunit gamma, found in Ureaplasma urealyticum serovar 10 (strain ATCC 33699 / Western).